The following is a 275-amino-acid chain: WIMGHMVNAIEQVDEFLDLGANAIEFDVDFDDDGVAKYTHHRIPCDCGRLCTKYAVFTEYLDYVRQVTTPGDPKFRKELVLHALDLKLQRISSEKAYAAGVDVATKLLDHYWMRGWNGGRAYILLNIPLVEDYEFIRAFKDTLRKEGHEQYNAKVGINFTGNEDLDEIREVLEKLGEDEHIWQADGITSCFPRGTERLKKALEKRDTPGYKYIPKVYAWTLVRSSIMRRSLRLGVDGVMSNYPDSVVKVLKEKEFSDKFRLATYADNPWEKFTPI.

Residue His5 is part of the active site. 2 residues coordinate Mg(2+): Glu25 and Asp27. Residue His41 is the Nucleophile of the active site. 2 cysteine pairs are disulfide-bonded: Cys45/Cys51 and Cys47/Cys190. Residue Asp85 participates in Mg(2+) binding.

The protein belongs to the arthropod phospholipase D family. Class II subfamily. The cofactor is Mg(2+). As to expression, expressed by the venom gland.

It localises to the secreted. It carries out the reaction an N-(acyl)-sphingosylphosphocholine = an N-(acyl)-sphingosyl-1,3-cyclic phosphate + choline. The enzyme catalyses an N-(acyl)-sphingosylphosphoethanolamine = an N-(acyl)-sphingosyl-1,3-cyclic phosphate + ethanolamine. The catalysed reaction is a 1-acyl-sn-glycero-3-phosphocholine = a 1-acyl-sn-glycero-2,3-cyclic phosphate + choline. It catalyses the reaction a 1-acyl-sn-glycero-3-phosphoethanolamine = a 1-acyl-sn-glycero-2,3-cyclic phosphate + ethanolamine. Its function is as follows. Dermonecrotic toxins cleave the phosphodiester linkage between the phosphate and headgroup of certain phospholipids (sphingolipid and lysolipid substrates), forming an alcohol (often choline) and a cyclic phosphate. This toxin acts on sphingomyelin (SM). It may also act on ceramide phosphoethanolamine (CPE), lysophosphatidylcholine (LPC) and lysophosphatidylethanolamine (LPE), but not on lysophosphatidylserine (LPS), and lysophosphatidylglycerol (LPG). It acts by transphosphatidylation, releasing exclusively cyclic phosphate products as second products. Induces dermonecrosis, hemolysis, increased vascular permeability, edema, inflammatory response, and platelet aggregation. The protein is Dermonecrotic toxin SpeSicTox-betaIIA3ii of Sicarius peruensis (Six-eyed sand spider).